We begin with the raw amino-acid sequence, 103 residues long: Pyrimidine/purine nucleoside phosphorylase (103 aa).

The protein belongs to the nucleoside phosphorylase PpnP family.

The catalysed reaction is a purine D-ribonucleoside + phosphate = a purine nucleobase + alpha-D-ribose 1-phosphate. The enzyme catalyses adenosine + phosphate = alpha-D-ribose 1-phosphate + adenine. It carries out the reaction cytidine + phosphate = cytosine + alpha-D-ribose 1-phosphate. It catalyses the reaction guanosine + phosphate = alpha-D-ribose 1-phosphate + guanine. The catalysed reaction is inosine + phosphate = alpha-D-ribose 1-phosphate + hypoxanthine. The enzyme catalyses thymidine + phosphate = 2-deoxy-alpha-D-ribose 1-phosphate + thymine. It carries out the reaction uridine + phosphate = alpha-D-ribose 1-phosphate + uracil. It catalyses the reaction xanthosine + phosphate = alpha-D-ribose 1-phosphate + xanthine. In terms of biological role, catalyzes the phosphorolysis of diverse nucleosides, yielding D-ribose 1-phosphate and the respective free bases. Can use uridine, adenosine, guanosine, cytidine, thymidine, inosine and xanthosine as substrates. Also catalyzes the reverse reactions. This chain is Pyrimidine/purine nucleoside phosphorylase, found in Nocardia farcinica (strain IFM 10152).